The chain runs to 455 residues: Beta-cyclopiazonate dehydrogenase (455 aa).

Residues 1–20 (MATRIASFIGISTVASLALA) form the signal peptide.

It belongs to the beta-cyclopiazonate dehydrogenase family. Requires FAD as cofactor.

It catalyses the reaction beta-cyclopiazonate + A = alpha-cyclopiazonate + AH2. In terms of biological role, beta-cyclopiazonate dehydrogenase involved in the synthesis of the fungal neurotoxin alpha-cyclopiazonic acid (CPA). CpaO carries out the dehydrogenation of beta-CPA to yield an unstable enimine product, which is captured by intramolecular cyclization to create the pentacyclic fused scaffold of alpha-cyclopiazonate. In Aspergillus flavus (strain ATCC 200026 / FGSC A1120 / IAM 13836 / NRRL 3357 / JCM 12722 / SRRC 167), this protein is Beta-cyclopiazonate dehydrogenase.